The following is a 419-amino-acid chain: S-adenosylmethionine synthase (419 aa).

Position 15 (histidine 15) interacts with ATP. Mg(2+) is bound at residue aspartate 17. Glutamate 43 is a binding site for K(+). Residues glutamate 56 and glutamine 100 each contribute to the L-methionine site. Residues 100–110 (QSPDIAQGVDE) form a flexible loop region. ATP contacts are provided by residues 171–173 (DGK), 248–249 (KF), aspartate 257, 263–264 (RK), alanine 280, and lysine 284. Aspartate 257 lines the L-methionine pocket. Lysine 288 provides a ligand contact to L-methionine.

The protein belongs to the AdoMet synthase family. As to quaternary structure, homotetramer; dimer of dimers. It depends on Mg(2+) as a cofactor. Requires K(+) as cofactor.

It localises to the cytoplasm. It carries out the reaction L-methionine + ATP + H2O = S-adenosyl-L-methionine + phosphate + diphosphate. It participates in amino-acid biosynthesis; S-adenosyl-L-methionine biosynthesis; S-adenosyl-L-methionine from L-methionine: step 1/1. Functionally, catalyzes the formation of S-adenosylmethionine (AdoMet) from methionine and ATP. The overall synthetic reaction is composed of two sequential steps, AdoMet formation and the subsequent tripolyphosphate hydrolysis which occurs prior to release of AdoMet from the enzyme. In Synechococcus sp. (strain WH7803), this protein is S-adenosylmethionine synthase.